The following is a 102-amino-acid chain: Ferredoxin (102 aa).

4Fe-4S ferredoxin-type domains are found at residues 45–73 and 74–102; these read VSVN…ELVE and TWIE…EVMK. Cys54, Cys57, Cys60, Cys64, Cys83, Cys86, Cys89, and Cys93 together coordinate [4Fe-4S] cluster.

Requires [4Fe-4S] cluster as cofactor.

The protein operates within membrane lipid metabolism; glycerophospholipid metabolism. Ferredoxin that is the specific electron donor for the geranylgeranyl reductase GGR involved in the biosynthesis of archaeal membrane lipids. The polypeptide is Ferredoxin (Methanosarcina acetivorans (strain ATCC 35395 / DSM 2834 / JCM 12185 / C2A)).